We begin with the raw amino-acid sequence, 607 residues long: Elongation factor 4 (607 aa).

The tr-type G domain maps to 11-193 (GKIRNFSIIA…QIVEKVPAPT (183 aa)). GTP contacts are provided by residues 23-28 (DHGKST) and 140-143 (NKID).

It belongs to the TRAFAC class translation factor GTPase superfamily. Classic translation factor GTPase family. LepA subfamily.

Its subcellular location is the cell membrane. The enzyme catalyses GTP + H2O = GDP + phosphate + H(+). Required for accurate and efficient protein synthesis under certain stress conditions. May act as a fidelity factor of the translation reaction, by catalyzing a one-codon backward translocation of tRNAs on improperly translocated ribosomes. Back-translocation proceeds from a post-translocation (POST) complex to a pre-translocation (PRE) complex, thus giving elongation factor G a second chance to translocate the tRNAs correctly. Binds to ribosomes in a GTP-dependent manner. The chain is Elongation factor 4 from Streptococcus pneumoniae (strain Taiwan19F-14).